Reading from the N-terminus, the 302-residue chain is Sulfate adenylyltransferase subunit 2 (302 aa).

It belongs to the PAPS reductase family. CysD subfamily. Heterodimer composed of CysD, the smaller subunit, and CysN.

The catalysed reaction is sulfate + ATP + H(+) = adenosine 5'-phosphosulfate + diphosphate. The protein operates within sulfur metabolism; hydrogen sulfide biosynthesis; sulfite from sulfate: step 1/3. With CysN forms the ATP sulfurylase (ATPS) that catalyzes the adenylation of sulfate producing adenosine 5'-phosphosulfate (APS) and diphosphate, the first enzymatic step in sulfur assimilation pathway. APS synthesis involves the formation of a high-energy phosphoric-sulfuric acid anhydride bond driven by GTP hydrolysis by CysN coupled to ATP hydrolysis by CysD. The sequence is that of Sulfate adenylyltransferase subunit 2 from Escherichia coli O1:K1 / APEC.